The chain runs to 353 residues: DNA polymerase IV (353 aa).

Residues 6-187 (IIHIDCDCFY…LPVTKLHGVG (182 aa)) form the UmuC domain. Mg(2+) is bound by residues Asp10 and Asp105. The active site involves Glu106.

The protein belongs to the DNA polymerase type-Y family. Monomer. Mg(2+) serves as cofactor.

It is found in the cytoplasm. It carries out the reaction DNA(n) + a 2'-deoxyribonucleoside 5'-triphosphate = DNA(n+1) + diphosphate. Functionally, poorly processive, error-prone DNA polymerase involved in untargeted mutagenesis. Copies undamaged DNA at stalled replication forks, which arise in vivo from mismatched or misaligned primer ends. These misaligned primers can be extended by PolIV. Exhibits no 3'-5' exonuclease (proofreading) activity. May be involved in translesional synthesis, in conjunction with the beta clamp from PolIII. This chain is DNA polymerase IV, found in Pseudomonas savastanoi pv. phaseolicola (strain 1448A / Race 6) (Pseudomonas syringae pv. phaseolicola (strain 1448A / Race 6)).